We begin with the raw amino-acid sequence, 398 residues long: NADH-quinone oxidoreductase subunit D (398 aa).

It belongs to the complex I 49 kDa subunit family. NDH-1 is composed of 14 different subunits. Subunits NuoB, C, D, E, F, and G constitute the peripheral sector of the complex.

The protein resides in the cell inner membrane. The enzyme catalyses a quinone + NADH + 5 H(+)(in) = a quinol + NAD(+) + 4 H(+)(out). Functionally, NDH-1 shuttles electrons from NADH, via FMN and iron-sulfur (Fe-S) centers, to quinones in the respiratory chain. The immediate electron acceptor for the enzyme in this species is believed to be ubiquinone. Couples the redox reaction to proton translocation (for every two electrons transferred, four hydrogen ions are translocated across the cytoplasmic membrane), and thus conserves the redox energy in a proton gradient. The polypeptide is NADH-quinone oxidoreductase subunit D (Bradyrhizobium sp. (strain ORS 278)).